A 481-amino-acid polypeptide reads, in one-letter code: MEAPAATSPSIGFPIDGRCNYFVEKKKRFCRMVAAAGKRFCGEHAGSAEEENTRKRILCPLDPKHTVYEDQLAKHLKKCNSREKPKPDFFIQDINAGLKDETEIPEQLVPFSSLSEEQLENLIKKLRKASEGLNSTHEDHIMSHPALHDALNDPRNGDCAVKHLKQQASILGNIEKLKLLGPRRCFVEFGAGKGKLSHWVDIALKDAENVHFILVERVTTRFKVDGKHRKKDSVFERLQIDIQHLCLNRVPVLREGRLPVVGIGKHLCGVATDVALRCLVETYAASFEEKDEEPLAKRIKNDKTEKESNTLAKEGSEKDVPETWTPVAGIVIALCCHHRCDWRHYVGKEYFKALGLGAVEFYYFQRMSSWATCGMRTSLEGSDVTPERKDAQRDENEEHDDGGDRLTDGNTDSLPGILTVEEKKKIGHLCKLLIDQGRLQYLQQKGFSPALQYYTDPLVSLENVLLTAVPAHPSSQEKHHQ.

The CHHC U11-48K-type zinc-finger motif lies at 56–83; sequence RILCPLDPKHTVYEDQLAKHLKKCNSRE. Residues C59, H65, H75, and C79 each contribute to the Zn(2+) site. The stretch at 113–140 forms a coiled coil; sequence SLSEEQLENLIKKLRKASEGLNSTHEDH. Disordered regions lie at residues 296–319 and 379–414; these read AKRI…SEKD and LEGS…TDSL. Residues 385–407 show a composition bias toward basic and acidic residues; the sequence is TPERKDAQRDENEEHDDGGDRLT.

The protein belongs to the methyltransferase TRM13 family.

The enzyme catalyses cytidine(4) in tRNA(Pro) + S-adenosyl-L-methionine = 2'-O-methylcytidine(4) in tRNA(Pro) + S-adenosyl-L-homocysteine + H(+). The catalysed reaction is cytidine(4) in tRNA(Gly)(GCC) + S-adenosyl-L-methionine = 2'-O-methylcytidine(4) in tRNA(Gly)(GCC) + S-adenosyl-L-homocysteine + H(+). It carries out the reaction adenosine(4) in tRNA(His) + S-adenosyl-L-methionine = 2'-O-methyladenosine(4) in tRNA(His) + S-adenosyl-L-homocysteine + H(+). Its function is as follows. tRNA methylase which 2'-O-methylates cytidine(4) in tRNA(Pro) and tRNA(Gly)(GCC), and adenosine(4) in tRNA(His). The protein is tRNA:m(4)X modification enzyme TRM13 homolog (Trmt13) of Mus musculus (Mouse).